The sequence spans 542 residues: Chaperonin GroEL (542 aa).

Residues 29 to 32, 86 to 90, Gly-413, 476 to 478, and Asp-492 each bind ATP; these read TLGP, DGTTT, and NAA.

The protein belongs to the chaperonin (HSP60) family. In terms of assembly, forms a cylinder of 14 subunits composed of two heptameric rings stacked back-to-back. Interacts with the co-chaperonin GroES.

The protein resides in the cytoplasm. The enzyme catalyses ATP + H2O + a folded polypeptide = ADP + phosphate + an unfolded polypeptide.. Its function is as follows. Together with its co-chaperonin GroES, plays an essential role in assisting protein folding. The GroEL-GroES system forms a nano-cage that allows encapsulation of the non-native substrate proteins and provides a physical environment optimized to promote and accelerate protein folding. The chain is Chaperonin GroEL from Bacillus cytotoxicus (strain DSM 22905 / CIP 110041 / 391-98 / NVH 391-98).